The primary structure comprises 485 residues: Noelin (485 aa).

The signal sequence occupies residues 1–24 (MSVPLLKIGVVLSTMAMITNWMSQ). 8 N-linked (GlcNAc...) asparagine glycosylation sites follow: asparagine 33, asparagine 103, asparagine 187, asparagine 288, asparagine 307, asparagine 394, asparagine 431, and asparagine 473. A coiled-coil region spans residues 87–225 (RDARTKQLRQ…ERLRACMQKL (139 aa)). Residues 226–478 (ACGKLTGISD…QTLYNVTLFH (253 aa)) form the Olfactomedin-like domain. Cysteine 227 and cysteine 409 are oxidised to a cystine.

Homotetramer; disulfide-linked. Dimer of dimers, giving rise to a V-shaped homotretramer. Isoform 1 and isoform 3 interact with RTN4R. Identified in a complex with RTN4R and LINGO1. Peripherally associated with AMPAR complex. AMPAR complex consists of an inner core made of 4 pore-forming GluA/GRIA proteins (GRIA1, GRIA2, GRIA3 and GRIA4) and 4 major auxiliary subunits arranged in a twofold symmetry. One of the two pairs of distinct binding sites is occupied either by CNIH2, CNIH3 or CACNG2, CACNG3. The other harbors CACNG2, CACNG3, CACNG4, CACNG8 or GSG1L. This inner core of AMPAR complex is complemented by outer core constituents binding directly to the GluA/GRIA proteins at sites distinct from the interaction sites of the inner core constituents. Outer core constituents include at least PRRT1, PRRT2, CKAMP44/SHISA9, FRRS1L and NRN1. The proteins of the inner and outer core serve as a platform for other, more peripherally associated AMPAR constituents, including OLFM1. Alone or in combination, these auxiliary subunits control the gating and pharmacology of the AMPAR complex and profoundly impact their biogenesis and protein processing. Interacts with OLFM2. In isoform 3 and isoform 4, the signal peptide is predicted to end in position 17. Expressed in the brain (at protein level). Expressed in the brain, predominantly in the cortex and hippocampus. In the pituitary only the two A-type and in the adrenal glands only the two B-type forms were detected.

Its subcellular location is the secreted. The protein resides in the synapse. It localises to the endoplasmic reticulum. The protein localises to the cell projection. It is found in the axon. Its subcellular location is the perikaryon. In terms of biological role, contributes to the regulation of axonal growth in the embryonic and adult central nervous system by inhibiting interactions between RTN4R and LINGO1. Inhibits RTN4R-mediated axon growth cone collapse. May play an important role in regulating the production of neural crest cells by the neural tube. May be required for normal responses to olfactory stimuli. This is Noelin (Olfm1) from Rattus norvegicus (Rat).